The sequence spans 462 residues: Alkaline ceramidase TOD1 (462 aa).

Residues 1–18 lie on the Cytoplasmic side of the membrane; the sequence is MGKFITTTLSPPLYARSK. A helical transmembrane segment spans residues 19–39; that stretch reads LLCFSLLYLFSTIFLFLYVSL. The Lumenal portion of the chain corresponds to 40–462; it reads SRNQCIFRYS…CKNYLTDMWG (423 aa). N-linked (GlcNAc...) asparagine glycosylation is found at N121, N132, and N449.

The protein belongs to the alkaline ceramidase family. Preferentially expressed in pollen grains, pollen tubes and silique guard cells, but barely detectable in roots, stems and leaves.

It is found in the golgi apparatus membrane. The enzyme catalyses an N-acylsphing-4-enine + H2O = sphing-4-enine + a fatty acid. Its pathway is lipid metabolism. Functionally, endoplasmic reticulum ceramidase that catalyzes the hydrolysis of ceramides into sphingosine and free fatty acids at alkaline pH (e.g. pH 9.5). Inactive on phytoceramide. Involved in the regulation of turgor pressure in guard cells and pollen tubes. This is Alkaline ceramidase TOD1 from Arabidopsis thaliana (Mouse-ear cress).